The sequence spans 600 residues: Aspartate--tRNA(Asp/Asn) ligase (600 aa).

Residue Glu-174 coordinates L-aspartate. The segment at 198 to 201 (QLFK) is aspartate. Residue Arg-220 coordinates L-aspartate. ATP-binding positions include 220–222 (RDE) and Gln-229. Position 457 (His-457) interacts with L-aspartate. Glu-491 contacts ATP. An L-aspartate-binding site is contributed by Arg-498. 543–546 (GLDR) is an ATP binding site.

Belongs to the class-II aminoacyl-tRNA synthetase family. Type 1 subfamily. In terms of assembly, homodimer.

The protein resides in the cytoplasm. It catalyses the reaction tRNA(Asx) + L-aspartate + ATP = L-aspartyl-tRNA(Asx) + AMP + diphosphate. Aspartyl-tRNA synthetase with relaxed tRNA specificity since it is able to aspartylate not only its cognate tRNA(Asp) but also tRNA(Asn). Reaction proceeds in two steps: L-aspartate is first activated by ATP to form Asp-AMP and then transferred to the acceptor end of tRNA(Asp/Asn). In Burkholderia multivorans (strain ATCC 17616 / 249), this protein is Aspartate--tRNA(Asp/Asn) ligase.